The primary structure comprises 175 residues: MAAVSMSVALRQALWGRRVATVAAVSVSKVSTRSLSTSTWRLAQDQTRDTQLITVDEKLDITTITGVPEEHIKTRKARIFVPARNNMQSGVNNTKKWKMEFDTRERWENPLMGWASTADPLSNLVLTFSTKEDAVAFAEKNGWSYDVEERKVPKPKSKSYGANFSWNKRTRVSTK.

The N-terminal 42 residues, 1-42 (MAAVSMSVALRQALWGRRVATVAAVSVSKVSTRSLSTSTWRL), are a transit peptide targeting the mitochondrion. Residues 149–175 (ERKVPKPKSKSYGANFSWNKRTRVSTK) form a disordered region. Position 173 is a phosphoserine (Ser-173).

Belongs to the complex I NDUFS4 subunit family. Mammalian complex I is composed of 45 different subunits. This is a component of the iron-sulfur (IP) fragment of the enzyme. Interacts with BCAP31 and TOMM40; the interaction mediates its translocation to the mitochondria; the interaction with BCAP31 is direct. Phosphorylated.

The protein localises to the mitochondrion inner membrane. Its function is as follows. Accessory subunit of the mitochondrial membrane respiratory chain NADH dehydrogenase (Complex I), that is believed not to be involved in catalysis. Complex I functions in the transfer of electrons from NADH to the respiratory chain. The immediate electron acceptor for the enzyme is believed to be ubiquinone. The chain is NADH dehydrogenase [ubiquinone] iron-sulfur protein 4, mitochondrial (NDUFS4) from Bos taurus (Bovine).